The following is a 459-amino-acid chain: UDP-N-acetylmuramate--L-alanine ligase (459 aa).

113–119 provides a ligand contact to ATP; that stretch reads GSHGKTS.

This sequence belongs to the MurCDEF family.

It is found in the cytoplasm. The catalysed reaction is UDP-N-acetyl-alpha-D-muramate + L-alanine + ATP = UDP-N-acetyl-alpha-D-muramoyl-L-alanine + ADP + phosphate + H(+). The protein operates within cell wall biogenesis; peptidoglycan biosynthesis. Cell wall formation. This chain is UDP-N-acetylmuramate--L-alanine ligase, found in Desulfotalea psychrophila (strain LSv54 / DSM 12343).